The following is a 283-amino-acid chain: 4-diphosphocytidyl-2-C-methyl-D-erythritol kinase (283 aa).

Lysine 10 is an active-site residue. Residue 99 to 109 participates in ATP binding; it reads PMGGGLGGGSS. Aspartate 141 is a catalytic residue.

This sequence belongs to the GHMP kinase family. IspE subfamily. Homodimer.

It carries out the reaction 4-CDP-2-C-methyl-D-erythritol + ATP = 4-CDP-2-C-methyl-D-erythritol 2-phosphate + ADP + H(+). It functions in the pathway isoprenoid biosynthesis; isopentenyl diphosphate biosynthesis via DXP pathway; isopentenyl diphosphate from 1-deoxy-D-xylulose 5-phosphate: step 3/6. Catalyzes the phosphorylation of the position 2 hydroxy group of 4-diphosphocytidyl-2C-methyl-D-erythritol. This chain is 4-diphosphocytidyl-2-C-methyl-D-erythritol kinase, found in Escherichia coli O9:H4 (strain HS).